Consider the following 78-residue polypeptide: Small ribosomal subunit protein bS18 (78 aa).

This sequence belongs to the bacterial ribosomal protein bS18 family. Part of the 30S ribosomal subunit. Forms a tight heterodimer with protein bS6.

Binds as a heterodimer with protein bS6 to the central domain of the 16S rRNA, where it helps stabilize the platform of the 30S subunit. This chain is Small ribosomal subunit protein bS18, found in Parafrankia sp. (strain EAN1pec).